A 152-amino-acid chain; its full sequence is 2-C-methyl-D-erythritol 2,4-cyclodiphosphate synthase (152 aa).

2 residues coordinate a divalent metal cation: Asp-8 and His-10. Residues 8–10 (DSH) and 34–35 (HS) contribute to the 4-CDP-2-C-methyl-D-erythritol 2-phosphate site. His-42 is an a divalent metal cation binding site. 4-CDP-2-C-methyl-D-erythritol 2-phosphate contacts are provided by residues 56 to 58 (DIG) and 61 to 65 (FPDTD).

This sequence belongs to the IspF family. Homotrimer. The cofactor is a divalent metal cation.

It carries out the reaction 4-CDP-2-C-methyl-D-erythritol 2-phosphate = 2-C-methyl-D-erythritol 2,4-cyclic diphosphate + CMP. It participates in isoprenoid biosynthesis; isopentenyl diphosphate biosynthesis via DXP pathway; isopentenyl diphosphate from 1-deoxy-D-xylulose 5-phosphate: step 4/6. Involved in the biosynthesis of isopentenyl diphosphate (IPP) and dimethylallyl diphosphate (DMAPP), two major building blocks of isoprenoid compounds. Catalyzes the conversion of 4-diphosphocytidyl-2-C-methyl-D-erythritol 2-phosphate (CDP-ME2P) to 2-C-methyl-D-erythritol 2,4-cyclodiphosphate (ME-CPP) with a corresponding release of cytidine 5-monophosphate (CMP). The sequence is that of 2-C-methyl-D-erythritol 2,4-cyclodiphosphate synthase from Thermus thermophilus (strain ATCC BAA-163 / DSM 7039 / HB27).